Reading from the N-terminus, the 502-residue chain is Glycerol kinase (502 aa).

Thr-14 is a binding site for ADP. Thr-14, Thr-15, and Ser-16 together coordinate ATP. Thr-14 is a binding site for sn-glycerol 3-phosphate. Arg-18 is an ADP binding site. 3 residues coordinate sn-glycerol 3-phosphate: Arg-84, Glu-85, and Tyr-136. Residues Arg-84, Glu-85, and Tyr-136 each contribute to the glycerol site. His-232 is subject to Phosphohistidine; by HPr. Residue Asp-246 coordinates sn-glycerol 3-phosphate. Asp-246 and Gln-247 together coordinate glycerol. The ADP site is built by Thr-268 and Gly-311. ATP-binding residues include Thr-268, Gly-311, Gln-315, and Gly-412. Gly-412 and Asn-416 together coordinate ADP.

The protein belongs to the FGGY kinase family. As to quaternary structure, homotetramer and homodimer (in equilibrium). The phosphoenolpyruvate-dependent sugar phosphotransferase system (PTS), including enzyme I, and histidine-containing protein (HPr) are required for the phosphorylation, which leads to the activation of the enzyme.

It carries out the reaction glycerol + ATP = sn-glycerol 3-phosphate + ADP + H(+). It functions in the pathway polyol metabolism; glycerol degradation via glycerol kinase pathway; sn-glycerol 3-phosphate from glycerol: step 1/1. With respect to regulation, activated by phosphorylation and inhibited by fructose 1,6-bisphosphate (FBP). Its function is as follows. Key enzyme in the regulation of glycerol uptake and metabolism. Catalyzes the phosphorylation of glycerol to yield sn-glycerol 3-phosphate. In Streptococcus gordonii (strain Challis / ATCC 35105 / BCRC 15272 / CH1 / DL1 / V288), this protein is Glycerol kinase.